The chain runs to 240 residues: Phosphoribosylaminoimidazole-succinocarboxamide synthase (240 aa).

This sequence belongs to the SAICAR synthetase family.

It carries out the reaction 5-amino-1-(5-phospho-D-ribosyl)imidazole-4-carboxylate + L-aspartate + ATP = (2S)-2-[5-amino-1-(5-phospho-beta-D-ribosyl)imidazole-4-carboxamido]succinate + ADP + phosphate + 2 H(+). Its pathway is purine metabolism; IMP biosynthesis via de novo pathway; 5-amino-1-(5-phospho-D-ribosyl)imidazole-4-carboxamide from 5-amino-1-(5-phospho-D-ribosyl)imidazole-4-carboxylate: step 1/2. The sequence is that of Phosphoribosylaminoimidazole-succinocarboxamide synthase from Wolbachia sp. subsp. Brugia malayi (strain TRS).